A 305-amino-acid polypeptide reads, in one-letter code: Serine/threonine-protein phosphatase PP-X homolog 3 (305 aa).

4 residues coordinate Mn(2+): aspartate 53, histidine 55, aspartate 81, and asparagine 113. Residue histidine 114 is the Proton donor of the active site. Residues histidine 163 and histidine 237 each contribute to the Mn(2+) site.

This sequence belongs to the PPP phosphatase family. PP-4 (PP-X) subfamily. It depends on Mn(2+) as a cofactor.

It catalyses the reaction O-phospho-L-seryl-[protein] + H2O = L-seryl-[protein] + phosphate. It carries out the reaction O-phospho-L-threonyl-[protein] + H2O = L-threonyl-[protein] + phosphate. The polypeptide is Serine/threonine-protein phosphatase PP-X homolog 3 (Ppx3) (Paramecium tetraurelia).